Consider the following 477-residue polypeptide: Bifunctional protein HldE (477 aa).

The interval 1–318 (MKVNLPAFER…ENAVRGRAAT (318 aa)) is ribokinase. An ATP-binding site is contributed by 195-198 (NLSE). Residue aspartate 264 is part of the active site. Residues 344–477 (MTNGVFDILH…IKKIQTESEK (134 aa)) are cytidylyltransferase.

It in the N-terminal section; belongs to the carbohydrate kinase PfkB family. In the C-terminal section; belongs to the cytidylyltransferase family. As to quaternary structure, homodimer.

It carries out the reaction D-glycero-beta-D-manno-heptose 7-phosphate + ATP = D-glycero-beta-D-manno-heptose 1,7-bisphosphate + ADP + H(+). It catalyses the reaction D-glycero-beta-D-manno-heptose 1-phosphate + ATP + H(+) = ADP-D-glycero-beta-D-manno-heptose + diphosphate. The protein operates within nucleotide-sugar biosynthesis; ADP-L-glycero-beta-D-manno-heptose biosynthesis; ADP-L-glycero-beta-D-manno-heptose from D-glycero-beta-D-manno-heptose 7-phosphate: step 1/4. It functions in the pathway nucleotide-sugar biosynthesis; ADP-L-glycero-beta-D-manno-heptose biosynthesis; ADP-L-glycero-beta-D-manno-heptose from D-glycero-beta-D-manno-heptose 7-phosphate: step 3/4. Its function is as follows. Catalyzes the phosphorylation of D-glycero-D-manno-heptose 7-phosphate at the C-1 position to selectively form D-glycero-beta-D-manno-heptose-1,7-bisphosphate. Functionally, catalyzes the ADP transfer from ATP to D-glycero-beta-D-manno-heptose 1-phosphate, yielding ADP-D-glycero-beta-D-manno-heptose. This is Bifunctional protein HldE from Salmonella arizonae (strain ATCC BAA-731 / CDC346-86 / RSK2980).